The chain runs to 505 residues: Glycerol kinase (505 aa).

An ADP-binding site is contributed by Thr-14. Positions 14, 15, and 16 each coordinate ATP. Residue Thr-14 participates in sn-glycerol 3-phosphate binding. Arg-18 serves as a coordination point for ADP. Positions 84, 85, 136, and 246 each coordinate sn-glycerol 3-phosphate. Positions 84, 85, 136, 246, and 247 each coordinate glycerol. 2 residues coordinate ADP: Thr-268 and Gly-311. Residues Thr-268, Gly-311, Gln-315, and Gly-412 each coordinate ATP. ADP contacts are provided by Gly-412 and Asn-416.

It belongs to the FGGY kinase family.

It catalyses the reaction glycerol + ATP = sn-glycerol 3-phosphate + ADP + H(+). The protein operates within polyol metabolism; glycerol degradation via glycerol kinase pathway; sn-glycerol 3-phosphate from glycerol: step 1/1. Its activity is regulated as follows. Inhibited by fructose 1,6-bisphosphate (FBP). In terms of biological role, key enzyme in the regulation of glycerol uptake and metabolism. Catalyzes the phosphorylation of glycerol to yield sn-glycerol 3-phosphate. This Vibrio cholerae serotype O1 (strain M66-2) protein is Glycerol kinase.